A 379-amino-acid polypeptide reads, in one-letter code: Multicilin (379 aa).

Disordered regions lie at residues 26–46 (SRRS…PWKS) and 87–106 (LLGT…NPSL). Residues 175–223 (EQYWKEVADQNQRALGTALIENNQLHVTLTQKQEEIASLRERNVQLKEL) are a coiled coil. The span at 289-309 (LQNRDPKRPRLQQEPDSKDCS) shows a compositional bias: basic and acidic residues. The disordered stretch occupies residues 289 to 311 (LQNRDPKRPRLQQEPDSKDCSTR).

It belongs to the geminin family. In terms of assembly, heterodimer (via coiled-coil domain) with GMNN (via coiled-coil domain); targets GMNN to the nucleus. Can form homodimers (in vitro, via coiled-coil domain), but these are much less stable than the heterodimer formed with GMNN.

It is found in the nucleus. Transcription regulator specifically required for multiciliate cell differentiation. Acts in a multiprotein complex containing E2F4 and E2F5 that binds and activates genes required for centriole biogenesis. Required for the deuterosome-mediated acentriolar pathway. Plays a role in mitotic cell cycle progression by promoting cell cycle exit. Modulates GMNN activity by reducing its affinity for CDT1. The sequence is that of Multicilin (Mcidas) from Rattus norvegicus (Rat).